Here is a 1450-residue protein sequence, read N- to C-terminus: ABC transporter G family member 37 (1450 aa).

One can recognise an ABC transporter 1 domain in the interval Gly-158–Ala-431. Gly-191 to Thr-198 contacts ATP. The ABC transmembrane type-2 1 domain occupies Glu-509–Phe-721. Helical transmembrane passes span Phe-527 to Phe-547, Gly-559 to Ala-579, Ile-614 to Phe-634, Leu-646 to Gly-666, Val-670 to Ile-690, and Ile-756 to Leu-776. The ABC transporter 2 domain maps to Ile-852 to Asp-1104. Gly-897–Thr-904 lines the ATP pocket. The region spanning Thr-1177 to Phe-1391 is the ABC transmembrane type-2 2 domain. The next 7 helical transmembrane spans lie at Ala-1198–Leu-1218, Tyr-1236–Val-1256, Leu-1284–Phe-1304, Phe-1311–Met-1331, Ile-1341–Ile-1361, Trp-1372–Gly-1392, and Val-1422–Ile-1442.

Belongs to the ABC transporter superfamily. ABCG family. PDR (TC 3.A.1.205) subfamily.

The protein localises to the membrane. Its function is as follows. May be a general defense protein. The polypeptide is ABC transporter G family member 37 (Oryza sativa subsp. japonica (Rice)).